We begin with the raw amino-acid sequence, 110 residues long: Ribonuclease P protein component 4 (110 aa).

Residues C65, C68, C94, and C97 each contribute to the Zn(2+) site.

Belongs to the eukaryotic/archaeal RNase P protein component 4 family. In terms of assembly, consists of a catalytic RNA component and at least 5 protein subunits. Zn(2+) serves as cofactor.

It localises to the cytoplasm. The enzyme catalyses Endonucleolytic cleavage of RNA, removing 5'-extranucleotides from tRNA precursor.. Its function is as follows. Part of ribonuclease P, a protein complex that generates mature tRNA molecules by cleaving their 5'-ends. This chain is Ribonuclease P protein component 4, found in Methanococcus maripaludis (strain DSM 14266 / JCM 13030 / NBRC 101832 / S2 / LL).